Here is a 136-residue protein sequence, read N- to C-terminus: Large-conductance mechanosensitive channel (136 aa).

2 helical membrane passes run 9 to 29 and 79 to 99; these read AFAS…GAAF and IQTV…LKAI.

Belongs to the MscL family. In terms of assembly, homopentamer.

It is found in the cell inner membrane. Its function is as follows. Channel that opens in response to stretch forces in the membrane lipid bilayer. May participate in the regulation of osmotic pressure changes within the cell. The polypeptide is Large-conductance mechanosensitive channel (Shewanella sp. (strain MR-4)).